The sequence spans 64 residues: Cytotoxin homolog S4C8 (64 aa).

4 disulfides stabilise this stretch: Cys-3–Cys-22, Cys-15–Cys-40, Cys-44–Cys-56, and Cys-57–Cys-62.

It belongs to the three-finger toxin family. Short-chain subfamily. Orphan group XIII sub-subfamily. Expressed by the venom gland.

The protein resides in the secreted. The sequence is that of Cytotoxin homolog S4C8 from Aspidelaps scutatus (Shield-nose snake).